An 85-amino-acid chain; its full sequence is Growth factor (85 aa).

A signal peptide spans 1-19; that stretch reads MVPRDLVATLLCAMCIVQA. Positions 33–77 constitute an EGF-like domain; that stretch reads RIKLCNDDYKNYCLNNGTCFTVALNNVSLNPFCACHINYVGSRCQ. Intrachain disulfides connect Cys-37–Cys-51, Cys-45–Cys-65, and Cys-67–Cys-76. N-linked (GlcNAc...) asparagine; by host glycans are attached at residues Asn-48 and Asn-58.

The protein resides in the secreted. Stimulates the growth of some tissues. This chain is Growth factor (MGF), found in Oryctolagus cuniculus (Rabbit).